We begin with the raw amino-acid sequence, 333 residues long: NADH-quinone oxidoreductase subunit H (333 aa).

8 helical membrane-spanning segments follow: residues 15-35, 88-108, 117-137, 159-179, 191-211, 239-259, 274-296, and 313-333; these read FFIF…FVTY, FILA…VIPF, IGVG…GVVT, ISYE…AGSL, VWYI…AVAE, WAFF…LITV, IPGA…WFRV, and VLLP…ELFF.

This sequence belongs to the complex I subunit 1 family. NDH-1 is composed of 14 different subunits. Subunits NuoA, H, J, K, L, M, N constitute the membrane sector of the complex.

It localises to the cell membrane. It carries out the reaction a quinone + NADH + 5 H(+)(in) = a quinol + NAD(+) + 4 H(+)(out). Functionally, NDH-1 shuttles electrons from NADH, via FMN and iron-sulfur (Fe-S) centers, to quinones in the respiratory chain. The immediate electron acceptor for the enzyme in this species is believed to be ubiquinone. Couples the redox reaction to proton translocation (for every two electrons transferred, four hydrogen ions are translocated across the cytoplasmic membrane), and thus conserves the redox energy in a proton gradient. This subunit may bind ubiquinone. This Bacillus cereus (strain G9842) protein is NADH-quinone oxidoreductase subunit H.